The sequence spans 446 residues: Chromosomal replication initiator protein DnaA (446 aa).

The domain I, interacts with DnaA modulators stretch occupies residues methionine 1 to proline 92. Residues proline 93–serine 109 form a domain II region. Residues methionine 110–serine 326 form a domain III, AAA+ region region. ATP contacts are provided by glycine 154, glycine 156, lysine 157, and threonine 158. The tract at residues serine 327–lysine 446 is domain IV, binds dsDNA.

This sequence belongs to the DnaA family. In terms of assembly, oligomerizes as a right-handed, spiral filament on DNA at oriC.

It localises to the cytoplasm. Its function is as follows. Plays an essential role in the initiation and regulation of chromosomal replication. ATP-DnaA binds to the origin of replication (oriC) to initiate formation of the DNA replication initiation complex once per cell cycle. Binds the DnaA box (a 9 base pair repeat at the origin) and separates the double-stranded (ds)DNA. Forms a right-handed helical filament on oriC DNA; dsDNA binds to the exterior of the filament while single-stranded (ss)DNA is stabiized in the filament's interior. The ATP-DnaA-oriC complex binds and stabilizes one strand of the AT-rich DNA unwinding element (DUE), permitting loading of DNA polymerase. After initiation quickly degrades to an ADP-DnaA complex that is not apt for DNA replication. Binds acidic phospholipids. The protein is Chromosomal replication initiator protein DnaA of Bacillus cereus (strain 03BB102).